The following is a 301-amino-acid chain: tRNA U34 carboxymethyltransferase (301 aa).

Residues Lys70, Trp84, Lys89, Gly108, 130 to 132 (DPS), 157 to 158 (VE), Tyr177, and Arg292 contribute to the carboxy-S-adenosyl-L-methionine site.

The protein belongs to the class I-like SAM-binding methyltransferase superfamily. CmoB family. In terms of assembly, homotetramer.

It catalyses the reaction carboxy-S-adenosyl-L-methionine + 5-hydroxyuridine(34) in tRNA = 5-carboxymethoxyuridine(34) in tRNA + S-adenosyl-L-homocysteine + H(+). Catalyzes carboxymethyl transfer from carboxy-S-adenosyl-L-methionine (Cx-SAM) to 5-hydroxyuridine (ho5U) to form 5-carboxymethoxyuridine (cmo5U) at position 34 in tRNAs. In Sulfurovum sp. (strain NBC37-1), this protein is tRNA U34 carboxymethyltransferase.